Here is a 574-residue protein sequence, read N- to C-terminus: DNA mismatch repair protein MutL (574 aa).

Belongs to the DNA mismatch repair MutL/HexB family.

Functionally, this protein is involved in the repair of mismatches in DNA. It is required for dam-dependent methyl-directed DNA mismatch repair. May act as a 'molecular matchmaker', a protein that promotes the formation of a stable complex between two or more DNA-binding proteins in an ATP-dependent manner without itself being part of a final effector complex. This Coxiella burnetii (strain RSA 331 / Henzerling II) protein is DNA mismatch repair protein MutL.